The primary structure comprises 403 residues: Phosphopentomutase (403 aa).

Positions 13, 298, 303, 339, 340, and 351 each coordinate Mn(2+).

It belongs to the phosphopentomutase family. Mn(2+) serves as cofactor.

The protein localises to the cytoplasm. It catalyses the reaction 2-deoxy-alpha-D-ribose 1-phosphate = 2-deoxy-D-ribose 5-phosphate. The enzyme catalyses alpha-D-ribose 1-phosphate = D-ribose 5-phosphate. It participates in carbohydrate degradation; 2-deoxy-D-ribose 1-phosphate degradation; D-glyceraldehyde 3-phosphate and acetaldehyde from 2-deoxy-alpha-D-ribose 1-phosphate: step 1/2. In terms of biological role, isomerase that catalyzes the conversion of deoxy-ribose 1-phosphate (dRib-1-P) and ribose 1-phosphate (Rib-1-P) to deoxy-ribose 5-phosphate (dRib-5-P) and ribose 5-phosphate (Rib-5-P), respectively. The protein is Phosphopentomutase of Streptococcus thermophilus.